The chain runs to 179 residues: ATP synthase subunit b (179 aa).

A helical membrane pass occupies residues 29–48; the sequence is VINLAILIGVLVYFGRGVLG.

The protein belongs to the ATPase B chain family. As to quaternary structure, F-type ATPases have 2 components, F(1) - the catalytic core - and F(0) - the membrane proton channel. F(1) has five subunits: alpha(3), beta(3), gamma(1), delta(1), epsilon(1). F(0) has four main subunits: a(1), b(1), b'(1) and c(10-14). The alpha and beta chains form an alternating ring which encloses part of the gamma chain. F(1) is attached to F(0) by a central stalk formed by the gamma and epsilon chains, while a peripheral stalk is formed by the delta, b and b' chains.

It localises to the cellular thylakoid membrane. Its function is as follows. F(1)F(0) ATP synthase produces ATP from ADP in the presence of a proton or sodium gradient. F-type ATPases consist of two structural domains, F(1) containing the extramembraneous catalytic core and F(0) containing the membrane proton channel, linked together by a central stalk and a peripheral stalk. During catalysis, ATP synthesis in the catalytic domain of F(1) is coupled via a rotary mechanism of the central stalk subunits to proton translocation. Functionally, component of the F(0) channel, it forms part of the peripheral stalk, linking F(1) to F(0). The complex from the organism is particularly stable to disruption and remains functional after 6 hrs at 55 degrees Celsius. This chain is ATP synthase subunit b, found in Thermosynechococcus vestitus (strain NIES-2133 / IAM M-273 / BP-1).